Here is a 215-residue protein sequence, read N- to C-terminus: HTH-type transcriptional repressor FabR (215 aa).

The 61-residue stretch at 10 to 70 (KTRRSLVEAA…TMVDESGLML (61 aa)) folds into the HTH tetR-type domain. Residues 33-52 (SLREVAREAGIAPTSFYRHF) constitute a DNA-binding region (H-T-H motif).

In terms of assembly, homodimer.

Its subcellular location is the cytoplasm. Functionally, represses the transcription of fabB, involved in unsaturated fatty acid (UFA) biosynthesis. By controlling UFA production, FabR directly influences the physical properties of the membrane bilayer. In Shigella boydii serotype 18 (strain CDC 3083-94 / BS512), this protein is HTH-type transcriptional repressor FabR.